A 592-amino-acid polypeptide reads, in one-letter code: Prospero homeobox protein 2 (592 aa).

Disordered stretches follow at residues 20-56 (EACT…PEWF), 85-129 (GNAQ…RKGG), 155-218 (KPRD…LPSG), 308-336 (RLDS…PLTA), and 353-382 (RYNN…LRPW). Positions 95-106 (CPKKARERKRKQ) are enriched in basic residues. The segment covering 201–211 (SGAEKHQESEK) has biased composition (basic and acidic residues). Pro residues predominate over residues 314-331 (YPIPPRMTPKPCQDPPAN). Low complexity predominate over residues 360–377 (SSSPPQDSSSQRHPSSEP). Residues 437–495 (QEGLNPGHLKKAKLMFFFTRYPSSNLLKVYFPDVQFNRCITSQMIKWFSNFREFYYIQM) form the Prospero-type homeo domain. The segment at 437–592 (QEGLNPGHLK…EIFKSSSYPQ (156 aa)) is homeo-Prospero. The Prospero domain occupies 496–592 (EKSARQAISD…EIFKSSSYPQ (97 aa)).

Belongs to the Prospero homeodomain family.

It is found in the nucleus. Its function is as follows. Transcription regulator. Does not seem to be essential for embryonic development and postnatal survival. The sequence is that of Prospero homeobox protein 2 (PROX2) from Homo sapiens (Human).